A 201-amino-acid chain; its full sequence is Protease (201 aa).

Catalysis depends on residues His-53, Asp-70, and Cys-121.

Belongs to the peptidase C5 family. In terms of assembly, interacts with protease cofactor pVI-C; this interaction is necessary for protease activation.

The protein localises to the virion. The protein resides in the host nucleus. The enzyme catalyses Cleaves proteins of the adenovirus and its host cell at two consensus sites: -Yaa-Xaa-Gly-Gly-|-Xaa- and -Yaa-Xaa-Gly-Xaa-|-Gly- (in which Yaa is Met, Ile or Leu, and Xaa is any amino acid).. Requires DNA and protease cofactor for maximal activation. Inside nascent virions, becomes partially activated by binding to the viral DNA, allowing it to cleave the cofactor that binds to the protease and fully activates it. Actin, like the viral protease cofactor, seems to act as a cofactor in the cleavage of cytokeratin 18 and of actin itself. Cleaves viral precursor proteins (pTP, pIIIa, pVI, pVII, pVIII, and pX) inside newly assembled particles giving rise to mature virions. Protease complexed to its cofactor slides along the viral DNA to specifically locate and cleave the viral precursors. Mature virions have a weakened organization compared to the unmature virions, thereby facilitating subsequent uncoating. Without maturation, the particle lacks infectivity and is unable to uncoat. Late in adenovirus infection, in the cytoplasm, may participate in the cytoskeleton destruction. Cleaves host cell cytoskeletal keratins K7 and K18. This Equine adenovirus B serotype 2 (EAdV-2) protein is Protease.